The primary structure comprises 715 residues: Mitochondrial division protein 1 (715 aa).

Positions 122–147 (AAATSGKLVTEKGEKGKKKRAETAHA) are disordered. A coiled-coil region spans residues 228-268 (IKNLKGAVQTITDNLDLLEIQKNLAASEIRELDLKMEKLKL). Residues 313 to 380 (EKAYEEATSA…HKNHEKKVQQ (68 aa)) form a disordered region. A compositionally biased stretch (polar residues) spans 347 to 358 (QEPQVNLASAQK). Residues 359–375 (SLKKRSKQTGYSHKNHE) are compositionally biased toward basic residues. 7 WD repeats span residues 409 to 449 (AHED…HVAS), 452 to 490 (GHLATVSCMQMDQYNTLITGGRDALLKMWDIQKAIDNDS), 503 to 542 (SHIDEITALSFEANNLVSGSQDRTIRQWDLNNGKCVQTLD), 564 to 604 (NNDH…RTLE), 605 to 644 (GHSDAVTSLQFDSLNLVTGSLDNSIRIWDLRTGTLADTFS), 646 to 681 (EHPVTCLQFDLNKIVVANQEGTVKVYNRQEKKHWFC), and 685 to 715 (EHSENAVEYVRYKDGYLVEGRANGDINAWAI).

It belongs to the WD repeat MDV1/CAF4 family.

Its subcellular location is the mitochondrion outer membrane. Involved in mitochondrial fission. Acts as an adapter protein required to form mitochondrial fission complexes. Formation of these complexes is required to promote constriction and fission of the mitochondrial compartment at a late step in mitochondrial division. The chain is Mitochondrial division protein 1 (MDV1) from Eremothecium gossypii (strain ATCC 10895 / CBS 109.51 / FGSC 9923 / NRRL Y-1056) (Yeast).